Here is a 1083-residue protein sequence, read N- to C-terminus: Rho GTPase-activating protein 39 (1083 aa).

Ser2 carries the N-acetylserine modification. WW domains are found at residues 25-58 and 63-97; these read NTRLEWVEIIEPRTRERMYANLVTGECVWDPPAG and RTSENQWWELFDPNTSRFYYYNASTQRTVWHRPQG. Positions 110-154 are disordered; the sequence is KQNTESPRASAESSPGRGSSVSREGSTSSSLEPEPDTEKAQELPA. Over residues 117 to 141 the composition is skewed to low complexity; the sequence is RASAESSPGRGSSVSREGSTSSSLE. Ser169 bears the Phosphoserine mark. The interval 226–369 is disordered; the sequence is AAQGNGYAPD…NKQGPPSPCQ (144 aa). Residues 245 to 256 are compositionally biased toward polar residues; the sequence is PSGSQHSPSLQT. Over residues 268–280 the composition is skewed to basic and acidic residues; it reads PERRPSPFLKRAE. 5 positions are modified to phosphoserine: Ser286, Ser384, Ser388, Ser406, and Ser407. Disordered regions lie at residues 405-545 and 570-599; these read GSSP…EAEG and MKQRSSWDSQQDGSGYESDGALPLPMPGPV. 2 stretches are compositionally biased toward polar residues: residues 474-488 and 573-582; these read SWSSQQDTLSSTGYS and RSSWDSQQDG. A phosphoserine mark is found at Ser604, Ser690, Ser715, and Ser726. Residues 722-879 form the MyTH4 domain; sequence WSSESIKKPM…PNVEEIRHAK (158 aa). One can recognise a Rho-GAP domain in the interval 890–1078; the sequence is SALQEVMGMQ…VLIQHLDTSF (189 aa).

It localises to the nucleus. The chain is Rho GTPase-activating protein 39 (ARHGAP39) from Homo sapiens (Human).